Reading from the N-terminus, the 208-residue chain is Large ribosomal subunit protein bL25 (208 aa).

Belongs to the bacterial ribosomal protein bL25 family. CTC subfamily. Part of the 50S ribosomal subunit; part of the 5S rRNA/L5/L18/L25 subcomplex. Contacts the 5S rRNA. Binds to the 5S rRNA independently of L5 and L18.

Its function is as follows. This is one of the proteins that binds to the 5S RNA in the ribosome where it forms part of the central protuberance. In Paracoccus denitrificans (strain Pd 1222), this protein is Large ribosomal subunit protein bL25.